The chain runs to 247 residues: Nodulation protein H (247 aa).

The interval 1-17 (MTHSTLPPQPFAILAMP) is hydrophobic.

Functionally, required for the formation of sulfated nod factor. Proposed to transfer activated sulfate (PAPS) to a N-acetylglucosamine of the nod factor. The chain is Nodulation protein H (nodH) from Rhizobium meliloti (strain 1021) (Ensifer meliloti).